The following is a 255-amino-acid chain: Thiazole synthase (255 aa).

The active-site Schiff-base intermediate with DXP is K96. 1-deoxy-D-xylulose 5-phosphate contacts are provided by residues G157, 183-184 (AG), and 205-206 (NT).

The protein belongs to the ThiG family. As to quaternary structure, homotetramer. Forms heterodimers with either ThiH or ThiS.

The protein localises to the cytoplasm. It catalyses the reaction [ThiS sulfur-carrier protein]-C-terminal-Gly-aminoethanethioate + 2-iminoacetate + 1-deoxy-D-xylulose 5-phosphate = [ThiS sulfur-carrier protein]-C-terminal Gly-Gly + 2-[(2R,5Z)-2-carboxy-4-methylthiazol-5(2H)-ylidene]ethyl phosphate + 2 H2O + H(+). It participates in cofactor biosynthesis; thiamine diphosphate biosynthesis. Catalyzes the rearrangement of 1-deoxy-D-xylulose 5-phosphate (DXP) to produce the thiazole phosphate moiety of thiamine. Sulfur is provided by the thiocarboxylate moiety of the carrier protein ThiS. In vitro, sulfur can be provided by H(2)S. The sequence is that of Thiazole synthase from Staphylococcus haemolyticus (strain JCSC1435).